A 296-amino-acid polypeptide reads, in one-letter code: Probable AP endonuclease (296 aa).

A disulfide bond links Cys16 and Cys20. Positions 78, 115, 142, 182, 218, 231, 233, and 271 each coordinate Zn(2+).

It belongs to the AP endonuclease 2 family. Requires Zn(2+) as cofactor.

It localises to the host nucleus. It is found in the host cytoplasm. The protein resides in the virion. Functionally, endonuclease of the viral base excision repair system that catalyzes DNA cleavage reaction at the apurinic or apyrimidinic sites (AP sites). Cleaves phosphodiester bonds on the 5' side of AP sites. In addition to endonuclease activity, the AP endonuclease has a proofreading 3'-5' exonuclease activity that is considerably more efficient in the elimination of a mismatch than in that of a correctly paired base. Displays 3'-phosphatase and 3'-repair diesterase activities. The single nucleotide gaps generated by the AP endonuclease are filled by the viral repair DNA polymerase X and the DNA ligase. In Ornithodoros (relapsing fever ticks), this protein is Probable AP endonuclease.